Here is a 300-residue protein sequence, read N- to C-terminus: 1D-myo-inositol 2-acetamido-2-deoxy-alpha-D-glucopyranoside deacetylase (300 aa).

Zn(2+) is bound by residues His13, Asp16, and His147.

It belongs to the MshB deacetylase family. Requires Zn(2+) as cofactor.

The enzyme catalyses 1D-myo-inositol 2-acetamido-2-deoxy-alpha-D-glucopyranoside + H2O = 1D-myo-inositol 2-amino-2-deoxy-alpha-D-glucopyranoside + acetate. Its function is as follows. Catalyzes the deacetylation of 1D-myo-inositol 2-acetamido-2-deoxy-alpha-D-glucopyranoside (GlcNAc-Ins) in the mycothiol biosynthesis pathway. This chain is 1D-myo-inositol 2-acetamido-2-deoxy-alpha-D-glucopyranoside deacetylase, found in Mycobacterium avium (strain 104).